The chain runs to 522 residues: Maturase K (522 aa).

It belongs to the intron maturase 2 family. MatK subfamily.

It localises to the plastid. Its subcellular location is the chloroplast. Usually encoded in the trnK tRNA gene intron. Probably assists in splicing its own and other chloroplast group II introns. The chain is Maturase K from Dianella ensifolia (Flax lily).